Here is a 173-residue protein sequence, read N- to C-terminus: MLGVSGMQPRQLAAQILNFALVLSTAFMMWKGLSVVSDSSSPIVVVLSGSMEPAFQRGDLLFLWNRGLDTQVGEIVVYNVKGKDIPIVHRVVRRYGGGKTPLRLLTKGDNNIADDTELYATSQSFLTRKEDVVGSVVGFIPFVGYVTILLSENPWMKQVMLGLMGVMVVLQRE.

Residues 1–15 lie on the Cytoplasmic side of the membrane; sequence MLGVSGMQPRQLAAQ. The helical; Signal-anchor for type II membrane protein transmembrane segment at 16 to 36 threads the bilayer; sequence ILNFALVLSTAFMMWKGLSVV. Over 37–173 the chain is Lumenal; sequence SDSSSPIVVV…MGVMVVLQRE (137 aa). Catalysis depends on charge relay system residues Ser-50, His-89, and Asp-115. The interval 159–170 is C-terminal short (CTS) helix; it reads VMLGLMGVMVVL.

This sequence belongs to the peptidase S26B family. As to quaternary structure, component of the signal peptidase complex (SPC) composed of a catalytic subunit SEC11 and three accessory subunits SPC1, SPC2 and SPC3. The complex induces a local thinning of the ER membrane which is used to measure the length of the signal peptide (SP) h-region of protein substrates. This ensures the selectivity of the complex towards h-regions shorter than 18-20 amino acids. SPC associates with the translocon complex.

It is found in the endoplasmic reticulum membrane. It carries out the reaction Cleavage of hydrophobic, N-terminal signal or leader sequences from secreted and periplasmic proteins.. Its function is as follows. Catalytic component of the signal peptidase complex (SPC) which catalyzes the cleavage of N-terminal signal sequences from nascent proteins as they are translocated into the lumen of the endoplasmic reticulum. Specifically cleaves N-terminal signal peptides that contain a hydrophobic alpha-helix (h-region) shorter than 18-20 amino acids. The polypeptide is Signal peptidase complex catalytic subunit SEC11 (SEC11) (Leptosphaeria maculans (strain JN3 / isolate v23.1.3 / race Av1-4-5-6-7-8) (Blackleg fungus)).